We begin with the raw amino-acid sequence, 212 residues long: Interleukin-6 (212 aa).

Residues Met1–Pro27 form the signal peptide. Cys72 and Cys78 are joined by a disulfide. Asn73 carries N-linked (GlcNAc...) asparagine glycosylation. Ser81 carries the phosphoserine modification. A disulfide bond links Cys101 and Cys111. Asn172 carries an N-linked (GlcNAc...) asparagine glycan.

Belongs to the IL-6 superfamily. In terms of assembly, component of a hexamer of two molecules each of IL6, IL6R and IL6ST; first binds to IL6R to associate with the signaling subunit IL6ST. Interacts with IL6R (via the N-terminal ectodomain); this interaction may be affected by IL6R-binding with SORL1, hence decreasing IL6 cis signaling. Interacts with SORL1 (via the N-terminal ectodomain); this interaction leads to IL6 internalization and lysosomal degradation. May form a trimeric complex with the soluble SORL1 ectodomain and soluble IL6R receptor; this interaction might stabilize circulating IL6, hence promoting IL6 trans signaling.

It is found in the secreted. Its function is as follows. Cytokine with a wide variety of biological functions in immunity, tissue regeneration, and metabolism. Binds to IL6R, then the complex associates to the signaling subunit IL6ST/gp130 to trigger the intracellular IL6-signaling pathway. The interaction with the membrane-bound IL6R and IL6ST stimulates 'classic signaling', whereas the binding of IL6 and soluble IL6R to IL6ST stimulates 'trans-signaling'. Alternatively, 'cluster signaling' occurs when membrane-bound IL6:IL6R complexes on transmitter cells activate IL6ST receptors on neighboring receiver cells. IL6 is a potent inducer of the acute phase response. Rapid production of IL6 contributes to host defense during infection and tissue injury, but excessive IL6 synthesis is involved in disease pathology. In the innate immune response, is synthesized by myeloid cells, such as macrophages and dendritic cells, upon recognition of pathogens through toll-like receptors (TLRs) at the site of infection or tissue injury. In the adaptive immune response, is required for the differentiation of B cells into immunoglobulin-secreting cells. Plays a major role in the differentiation of CD4(+) T cell subsets. Essential factor for the development of T follicular helper (Tfh) cells that are required for the induction of germinal-center formation. Required to drive naive CD4(+) T cells to the Th17 lineage. Also required for proliferation of myeloma cells and the survival of plasmablast cells. Functionally, acts as an essential factor in bone homeostasis and on vessels directly or indirectly by induction of VEGF, resulting in increased angiogenesis activity and vascular permeability. Induces, through 'trans-signaling' and synergistically with IL1B and TNF, the production of VEGF. Involved in metabolic controls, is discharged into the bloodstream after muscle contraction increasing lipolysis and improving insulin resistance. 'Trans-signaling' in central nervous system also regulates energy and glucose homeostasis. Mediates, through GLP-1, crosstalk between insulin-sensitive tissues, intestinal L cells and pancreatic islets to adapt to changes in insulin demand. Also acts as a myokine. Plays a protective role during liver injury, being required for maintenance of tissue regeneration. Also has a pivotal role in iron metabolism by regulating HAMP/hepcidin expression upon inflammation or bacterial infection. Through activation of IL6ST-YAP-NOTCH pathway, induces inflammation-induced epithelial regeneration. This chain is Interleukin-6 (IL6), found in Macaca mulatta (Rhesus macaque).